A 167-amino-acid polypeptide reads, in one-letter code: Sporulation membrane protein YtrI (167 aa).

Residues 15 to 35 (FFAGMMCGAVISWFFFLFTYG) form a helical membrane-spanning segment.

The protein localises to the cell membrane. In terms of biological role, involved in sporulation. The protein is Sporulation membrane protein YtrI (ytrI) of Bacillus subtilis (strain 168).